The primary structure comprises 280 residues: Protein HEAT-INDUCED TAS1 TARGET 4 (280 aa).

The protein belongs to the heat induced plant HTT protein family. Expressed in seedlings, leaves, stems, inflorescences and siliques.

It is found in the cytoplasm. It localises to the nucleus. In terms of biological role, mediates both basal and acquired thermotolerance. This chain is Protein HEAT-INDUCED TAS1 TARGET 4, found in Arabidopsis thaliana (Mouse-ear cress).